Consider the following 113-residue polypeptide: Hydrogenase maturation factor HypA (113 aa).

Residue His-2 coordinates Ni(2+). 4 residues coordinate Zn(2+): Cys-73, Cys-76, Cys-89, and Cys-92.

Belongs to the HypA/HybF family.

Its function is as follows. Involved in the maturation of [NiFe] hydrogenases. Required for nickel insertion into the metal center of the hydrogenase. This Rhizobium leguminosarum bv. viciae protein is Hydrogenase maturation factor HypA.